A 272-amino-acid polypeptide reads, in one-letter code: Phosphatidylglycerol--prolipoprotein diacylglyceryl transferase (272 aa).

4 helical membrane passes run 16–36 (VGLHLSWYGILFSLGIFLSSF), 62–82 (FALGALLAIIIGARLAYVLFY), 97–117 (IWKGGLSSHGAVISVVIWAAV), and 129–149 (LSVTYICDLCGAVFGCAALLI). Arginine 150 serves as a coordination point for a 1,2-diacyl-sn-glycero-3-phospho-(1'-sn-glycerol). The next 2 helical transmembrane spans lie at 206–226 (GVIRLGSGYSAAGALIGVAVI) and 246–266 (ILTIGQWLSIPMIFLGVGIIW).

It belongs to the Lgt family.

Its subcellular location is the cell inner membrane. It carries out the reaction L-cysteinyl-[prolipoprotein] + a 1,2-diacyl-sn-glycero-3-phospho-(1'-sn-glycerol) = an S-1,2-diacyl-sn-glyceryl-L-cysteinyl-[prolipoprotein] + sn-glycerol 1-phosphate + H(+). It functions in the pathway protein modification; lipoprotein biosynthesis (diacylglyceryl transfer). Its function is as follows. Catalyzes the transfer of the diacylglyceryl group from phosphatidylglycerol to the sulfhydryl group of the N-terminal cysteine of a prolipoprotein, the first step in the formation of mature lipoproteins. This chain is Phosphatidylglycerol--prolipoprotein diacylglyceryl transferase, found in Chlamydia trachomatis serovar D (strain ATCC VR-885 / DSM 19411 / UW-3/Cx).